Here is a 976-residue protein sequence, read N- to C-terminus: Peptidylglycine alpha-amidating monooxygenase (976 aa).

An N-terminal signal peptide occupies residues 1-25 (MAGRARSGLLLLLLGLLALQSSCLA). Residues 1-497 (MAGRARSGLL…EGPWEPEPSG (497 aa)) form a peptidylglycine alpha-hydroxylating monooxygenase region. Residues 26–35 (FRSPLSVFKR) constitute a propeptide that is removed on maturation. Over 36–866 (FKETTRSFSN…QKLSTEPGSG (831 aa)) the chain is Intragranular. Cystine bridges form between Cys47–Cys186, Cys81–Cys126, Cys114–Cys131, Cys227–Cys334, and Cys293–Cys315. Cu(2+) contacts are provided by His107 and His108. Residues His172, His242, His244, and Met314 each coordinate Cu(2+). The peptidyl-alpha-hydroxyglycine alpha-amidating lyase stretch occupies residues 498–820 (DFHVEEELDW…LTEKMEHRSV (323 aa)). NHL repeat units follow at residues 501–544 (VEEE…NSFD), 570–611 (AEIL…LDPH), 620–665 (LGRS…FSPS), and 673–717 (GEES…FKTD). Val520 lines the Ca(2+) pocket. Arg533 provides a ligand contact to a protein. His585 provides a ligand contact to Zn(2+). Leu587 serves as a coordination point for Ca(2+). Cys634 and Cys655 are joined by a disulfide. Position 654 (Tyr654) interacts with a protein. Position 690 (His690) interacts with Zn(2+). A disulfide bond links Cys702 and Cys713. Arg706 is a binding site for a protein. N-linked (GlcNAc...) asparagine glycosylation is present at Asn765. An NHL 5 repeat occupies 769 to 812 (GEIIDVFKPVRKHFDMPHDIVASEDGTVYIGDAHTNTVWKFTLT). The residue at position 774 (Val774) is a Sulfotyrosine. His786 lines the Zn(2+) pocket. Asp787 provides a ligand contact to Ca(2+). Glu792 carries the sulfotyrosine modification. Residues 867–890 (VSVVLITTLLVIPVLVLLAIVMFI) traverse the membrane as a helical segment. Topologically, residues 891-976 (RWKKSRAFGD…APLPKPAPSS (86 aa)) are cytoplasmic. Ser921, Ser932, and Ser945 each carry phosphoserine. Positions 928-945 (NFFASRKGYSRKGFDRVS) are interaction with RASSF9. The segment at 940-976 (GFDRVSTEGSDQEKDEDDGTESEEEYSAPLPKPAPSS) is disordered. Thr946 bears the Phosphothreonine mark. Ser949 carries the post-translational modification Phosphoserine. A compositionally biased stretch (acidic residues) spans 952-965 (EKDEDDGTESEEEY). Residue Thr959 is modified to Phosphothreonine. Ser961 is subject to Phosphoserine.

The protein in the C-terminal section; belongs to the peptidyl-alpha-hydroxyglycine alpha-amidating lyase family. This sequence in the N-terminal section; belongs to the copper type II ascorbate-dependent monooxygenase family. As to quaternary structure, monomer. Interacts with RASSF9. It depends on Zn(2+) as a cofactor. The cofactor is Cu(2+).

The protein localises to the cytoplasmic vesicle. The protein resides in the secretory vesicle membrane. It localises to the membrane. Its subcellular location is the secreted. It carries out the reaction a [peptide]-C-terminal glycine + 2 L-ascorbate + O2 = a [peptide]-C-terminal (2S)-2-hydroxyglycine + 2 monodehydro-L-ascorbate radical + H2O. It catalyses the reaction a [peptide]-C-terminal (2S)-2-hydroxyglycine = a [peptide]-C-terminal amide + glyoxylate. The catalysed reaction is N-dodecanoylglycine + 2 L-ascorbate + O2 = N-dodecanoyl-(2S)-hydroxyglycine + 2 monodehydro-L-ascorbate radical + H2O. The enzyme catalyses N-dodecanoyl-(2S)-hydroxyglycine = dodecanamide + glyoxylate. It carries out the reaction N-(9Z,12Z,15Z)-octadecatrienoylglycine + 2 L-ascorbate + O2 = N-(9Z,12Z,15Z)-octadecatrienoyl-(2S)-hydroxyglycine + 2 monodehydro-L-ascorbate radical + H2O. It catalyses the reaction N-(9Z,12Z,15Z)-octadecatrienoyl-(2S)-hydroxyglycine = (9Z,12Z,15Z)-octadecatrienamide + glyoxylate. The catalysed reaction is N-(9Z-octadecenoyl)glycine + 2 L-ascorbate + O2 = N-(9Z-octadecenoyl)-(2S)-hydroxyglycine + 2 monodehydro-L-ascorbate radical + H2O. The enzyme catalyses N-(9Z-octadecenoyl)-(2S)-hydroxyglycine = (9Z)-octadecenamide + glyoxylate. It carries out the reaction N-tetradecanoylglycine + 2 L-ascorbate + O2 = N-tetradecanoyl-(2S)-hydroxyglycine + 2 monodehydro-L-ascorbate radical + H2O. It catalyses the reaction N-tetradecanoyl-(2S)-hydroxyglycine = tetradecamide + glyoxylate. The catalysed reaction is N-decanoylglycine + 2 L-ascorbate + O2 = N-decanoyl-(2S)-hydroxyglycine + 2 monodehydro-L-ascorbate radical + H2O. The enzyme catalyses N-decanoyl-(2S)-hydroxyglycine = decanamide + glyoxylate. It carries out the reaction N-octanoylglycine + 2 L-ascorbate + O2 = N-octanoyl-(2S)-hydroxyglycine + 2 monodehydro-L-ascorbate radical + H2O. It catalyses the reaction N-octanoyl-(2S)-hydroxyglycine = octanamide + glyoxylate. PAM activity is inhibited by EDTA, phenylglyoxal and diethyl pyrocarbonate. PAL activity is stimulated by cadmium and inhibited by mercury. Functionally, bifunctional enzyme that catalyzes amidation of the C-terminus of proteins. Alpha-amidation is present at the C-terminus of many endocrine hormones and neuropeptides and is required for their activity. C-terminal amidation also takes place in response to protein fragmentation triggered by oxidative stress, promoting degradation of amidated protein fragments by the proteasome. Alpha-amidation involves two sequential reactions, both of which are catalyzed by separate catalytic domains of the enzyme. The first step, catalyzed by peptidyl alpha-hydroxylating monooxygenase (PHM) domain, is the copper-, ascorbate-, and O2- dependent stereospecific hydroxylation (with S stereochemistry) at the alpha-carbon (C-alpha) of the C-terminal glycine of the peptidylglycine substrate. The second step, catalyzed by the peptidylglycine amidoglycolate lyase (PAL) domain, is the zinc-dependent cleavage of the N-C-alpha bond, producing the alpha-amidated peptide and glyoxylate. Similarly, catalyzes the two-step conversion of an N-fatty acylglycine to a primary fatty acid amide and glyoxylate. In Rattus norvegicus (Rat), this protein is Peptidylglycine alpha-amidating monooxygenase.